A 348-amino-acid chain; its full sequence is Dihydroorotase (348 aa).

Zn(2+) is bound by residues His17 and His19. Residues 19–21 (HLR) and Asn45 contribute to the substrate site. Lys103, His140, and His178 together coordinate Zn(2+). Position 103 is an N6-carboxylysine (Lys103). Substrate is bound at residue His140. Leu223 contacts substrate. Position 251 (Asp251) interacts with Zn(2+). Asp251 is a catalytic residue. Positions 255 and 267 each coordinate substrate.

Belongs to the metallo-dependent hydrolases superfamily. DHOase family. Class II DHOase subfamily. As to quaternary structure, homodimer. It depends on Zn(2+) as a cofactor.

It carries out the reaction (S)-dihydroorotate + H2O = N-carbamoyl-L-aspartate + H(+). It participates in pyrimidine metabolism; UMP biosynthesis via de novo pathway; (S)-dihydroorotate from bicarbonate: step 3/3. Its function is as follows. Catalyzes the reversible cyclization of carbamoyl aspartate to dihydroorotate. This Salmonella arizonae (strain ATCC BAA-731 / CDC346-86 / RSK2980) protein is Dihydroorotase.